A 304-amino-acid polypeptide reads, in one-letter code: Non-specific ribonucleoside hydrolase RihC (304 aa).

His233 is a catalytic residue.

Belongs to the IUNH family. RihC subfamily.

Functionally, hydrolyzes both purine and pyrimidine ribonucleosides with a broad-substrate specificity. The protein is Non-specific ribonucleoside hydrolase RihC of Shigella sonnei (strain Ss046).